The following is a 226-amino-acid chain: UPF0111 protein AF_1799 (226 aa).

It belongs to the UPF0111 family.

The polypeptide is UPF0111 protein AF_1799 (Archaeoglobus fulgidus (strain ATCC 49558 / DSM 4304 / JCM 9628 / NBRC 100126 / VC-16)).